The following is a 517-amino-acid chain: MTVMVSRIEYIGQIVRGEATVIWILVALVLVAYLILPNPTYRTNVKVPTVRYLGGWMPDLVDRLFFNTKATSVIYDGYKQYKKKAYKVLKADGDLVVLSTRYAEELRQLPASTLNALEATFTDHVGDYTTILTDSHLHTETIQKRLTPAIGRLIPRIISELDHAYEVEFPKCDGKWVAINPYEVFLRLVARVGARIFIGDTLCRDEQWLKASIDYTKNIFVTIALLRPVPGFLQPLVGRVLPSSRSLNHQLAYIKNEFLGPLIEKRREMESSGDPNYEKPDDFLQWMMDLAKTEQESHPHNLAQRLLGITSMAVVHTSAMSLTHILYDLLVMPQWLQPLRDEIQEVNPDWHSTTQAHLIGLKGMDSFLKESQRFNPPGELSFHRVVKHDLTLSDGLFLPKGTHICMAAGPISRDADVMSDPDTFDAFRFVKENRPTSGFVSTGATNMHFGLGRYACPGRFFAAFVMKAILSRFLADYDFRFGPDQKDRPKNMMIGDKIVPNVSTPIFIRKRTTSKPL.

The chain crosses the membrane as a helical span at residues 17–37; sequence GEATVIWILVALVLVAYLILP. Cys-456 provides a ligand contact to heme. N-linked (GlcNAc...) asparagine glycosylation occurs at Asn-501.

This sequence belongs to the cytochrome P450 family. Requires heme as cofactor.

It is found in the membrane. It participates in secondary metabolite biosynthesis. In terms of biological role, cytochrome P450 monooxygenase; part of the gene cluster that mediates the biosynthesis of the indole diterpenes penitrems. The geranylgeranyl diphosphate (GGPP) synthase penG catalyzes the first step in penitrem biosynthesis via conversion of farnesyl pyrophosphate and isopentyl pyrophosphate into geranylgeranyl pyrophosphate (GGPP). Condensation of indole-3-glycerol phosphate with GGPP by the prenyl transferase penC then forms 3-geranylgeranylindole (3-GGI). Epoxidation by the FAD-dependent monooxygenase penM leads to a epoxidized-GGI that is substrate of the terpene cyclase penB for cyclization to yield paspaline. Paspaline is subsequently converted to 13-desoxypaxilline by the cytochrome P450 monooxygenase penP, the latter being then converted to paxilline by the cytochrome P450 monooxygenase penQ. Paxilline is converted to beta-paxitriol via C-10 ketoreduction by the short-chain dehydrogenase PC-15 which can be monoprenylated at the C-20 by the indole diterpene prenyltransferase penD. A two-step elimination (acetylation and elimination) process performed by the O-acetyltransferase PC-16 and the P.simplicissimum ptmI-ortholog not yet identified in P.crustosum, leads to the production of the prenylated form of penijanthine. The FAD-linked oxidoreductase ptmO then converts the prenylated form of penijanthine into PC-M5 which is in turn transformed into PC-M4 by the aromatic dimethylallyltransferase PC-22. A series of oxidation steps involving 4 cytochrome P450 monooxygenases (PC-21, PC-05, PC-23, PC-20) and a FAD-dependent monooxygenase (PC-14) are required for the transformation of PC-M4 to penitrems A and E. Synthesis of these final products is proposed to proceed via penitrems D and C (PC-21, PC-05, PC-14) and penitrems B and F (PC-21, PC-05, PC-14, PC-23). The protein is Cytochrome P450 monooxygenase penP of Penicillium crustosum (Blue mold fungus).